Here is a 70-residue protein sequence, read N- to C-terminus: Acyl carrier protein (70 aa).

A Carrier domain is found at 2–70 (SDIADRVKKI…ETIQTFGDAP (69 aa)). Ser-37 is modified (O-(pantetheine 4'-phosphoryl)serine).

It belongs to the acyl carrier protein (ACP) family. In terms of processing, 4'-phosphopantetheine is transferred from CoA to a specific serine of apo-ACP by AcpS. This modification is essential for activity because fatty acids are bound in thioester linkage to the sulfhydryl of the prosthetic group.

It is found in the cytoplasm. It functions in the pathway lipid metabolism; fatty acid biosynthesis. Carrier of the growing fatty acid chain in fatty acid biosynthesis. The polypeptide is Acyl carrier protein (Cereibacter sphaeroides (Rhodobacter sphaeroides)).